We begin with the raw amino-acid sequence, 279 residues long: Tryptophan synthase alpha chain (279 aa).

Active-site proton acceptor residues include Glu49 and Asp60.

The protein belongs to the TrpA family. As to quaternary structure, tetramer of two alpha and two beta chains.

It catalyses the reaction (1S,2R)-1-C-(indol-3-yl)glycerol 3-phosphate + L-serine = D-glyceraldehyde 3-phosphate + L-tryptophan + H2O. Its pathway is amino-acid biosynthesis; L-tryptophan biosynthesis; L-tryptophan from chorismate: step 5/5. In terms of biological role, the alpha subunit is responsible for the aldol cleavage of indoleglycerol phosphate to indole and glyceraldehyde 3-phosphate. The sequence is that of Tryptophan synthase alpha chain from Nitrosospira multiformis (strain ATCC 25196 / NCIMB 11849 / C 71).